A 148-amino-acid polypeptide reads, in one-letter code: Lysozyme C, milk isozyme (148 aa).

The first 18 residues, 1–18 (MKALLIVGLLLLSVAVQG), serve as a signal peptide directing secretion. The C-type lysozyme domain occupies 19 to 148 (KKFQRCELAR…LRSYVQGCRV (130 aa)). Disulfide bonds link cysteine 24–cysteine 146, cysteine 48–cysteine 134, cysteine 83–cysteine 99, and cysteine 95–cysteine 113. Active-site residues include glutamate 53 and aspartate 71.

This sequence belongs to the glycosyl hydrolase 22 family.

The enzyme catalyses Hydrolysis of (1-&gt;4)-beta-linkages between N-acetylmuramic acid and N-acetyl-D-glucosamine residues in a peptidoglycan and between N-acetyl-D-glucosamine residues in chitodextrins.. Functionally, lysozymes have primarily a bacteriolytic function; those in tissues and body fluids are associated with the monocyte-macrophage system and enhance the activity of immunoagents. This chain is Lysozyme C, milk isozyme, found in Bos taurus (Bovine).